Consider the following 420-residue polypeptide: UDP-N-acetyl-D-mannosamine dehydrogenase (420 aa).

The NAD(+) site is built by Tyr-13, Ile-14, Asp-33, Thr-85, and Thr-126. Residues Arg-160, Val-161, Lys-212, Asn-216, Arg-219, His-250, Arg-252, and Gly-263 each contribute to the UDP-N-acetyl-alpha-D-mannosaminouronate site. Catalysis depends on Lys-212, which acts as the Proton donor/acceptor. Catalysis depends on Cys-266, which acts as the Nucleophile. Phe-330 and Lys-331 together coordinate UDP-N-acetyl-alpha-D-mannosaminouronate. NAD(+) is bound at residue Arg-338. Position 416 (Lys-416) interacts with UDP-N-acetyl-alpha-D-mannosaminouronate.

The protein belongs to the UDP-glucose/GDP-mannose dehydrogenase family. WecC subfamily. Homodimer.

It carries out the reaction UDP-N-acetyl-alpha-D-mannosamine + 2 NAD(+) + H2O = UDP-N-acetyl-alpha-D-mannosaminouronate + 2 NADH + 3 H(+). Its pathway is bacterial outer membrane biogenesis; enterobacterial common antigen biosynthesis. Catalyzes the four-electron oxidation of UDP-N-acetyl-D-mannosamine (UDP-ManNAc), reducing NAD(+) and releasing UDP-N-acetylmannosaminuronic acid (UDP-ManNAcA). In Yersinia pestis, this protein is UDP-N-acetyl-D-mannosamine dehydrogenase.